Reading from the N-terminus, the 124-residue chain is Small ribosomal subunit protein uS12 (124 aa).

The segment at 1–25 (MPTINQLIRKPRKSQKEKTASPALQ) is disordered. Asp89 carries the 3-methylthioaspartic acid modification.

This sequence belongs to the universal ribosomal protein uS12 family. In terms of assembly, part of the 30S ribosomal subunit. Contacts proteins S8 and S17. May interact with IF1 in the 30S initiation complex.

In terms of biological role, with S4 and S5 plays an important role in translational accuracy. Functionally, interacts with and stabilizes bases of the 16S rRNA that are involved in tRNA selection in the A site and with the mRNA backbone. Located at the interface of the 30S and 50S subunits, it traverses the body of the 30S subunit contacting proteins on the other side and probably holding the rRNA structure together. The combined cluster of proteins S8, S12 and S17 appears to hold together the shoulder and platform of the 30S subunit. This is Small ribosomal subunit protein uS12 from Borrelia duttonii (strain Ly).